Consider the following 301-residue polypeptide: Mycothiol acetyltransferase (301 aa).

2 consecutive N-acetyltransferase domains span residues 6 to 151 (EWRQ…ILRD) and 153 to 301 (VSLR…QYGR). 79-81 (LFV) contacts acetyl-CoA. Residues glutamate 180, lysine 219, and glutamate 235 each coordinate 1D-myo-inositol 2-(L-cysteinylamino)-2-deoxy-alpha-D-glucopyranoside. Residues 239–241 (VGV) and 246–252 (QGGGLGR) each bind acetyl-CoA. Tyrosine 273 is a 1D-myo-inositol 2-(L-cysteinylamino)-2-deoxy-alpha-D-glucopyranoside binding site.

Belongs to the acetyltransferase family. MshD subfamily. In terms of assembly, monomer.

The catalysed reaction is 1D-myo-inositol 2-(L-cysteinylamino)-2-deoxy-alpha-D-glucopyranoside + acetyl-CoA = mycothiol + CoA + H(+). Functionally, catalyzes the transfer of acetyl from acetyl-CoA to desacetylmycothiol (Cys-GlcN-Ins) to form mycothiol. The polypeptide is Mycothiol acetyltransferase (Amycolatopsis mediterranei (strain U-32)).